The primary structure comprises 1334 residues: Aldehyde oxidase 4 (1334 aa).

Positions 6–93 (DELIFFVNGK…GAAVTTVEGV (88 aa)) constitute a 2Fe-2S ferredoxin-type domain. [2Fe-2S] cluster is bound by residues cysteine 45, cysteine 50, cysteine 53, and cysteine 75. Glutamine 114 lines the Mo-molybdopterin pocket. [2Fe-2S] cluster-binding residues include cysteine 115, cysteine 118, cysteine 150, and cysteine 152. Residue cysteine 152 participates in Mo-molybdopterin binding. Residues 235-421 (FQGERTIWIM…LSVFIPYSGQ (187 aa)) enclose the FAD-binding PCMH-type domain. Residues 263 to 270 (LVMGNTAV), alanine 345, threonine 354, histidine 358, aspartate 367, and alanine 411 contribute to the FAD site. Residues alanine 802, 802–803 (AF), leucine 1043, 1084–1087 (GSMG), glutamine 1199, and leucine 1263 contribute to the Mo-molybdopterin site. Glutamate 1265 (proton acceptor; for azaheterocycle hydroxylase activity) is an active-site residue.

The protein belongs to the xanthine dehydrogenase family. In terms of assembly, homodimer. The cofactor is [2Fe-2S] cluster. FAD is required as a cofactor. Requires Mo-molybdopterin as cofactor.

It localises to the cytoplasm. The catalysed reaction is an aldehyde + O2 + H2O = a carboxylate + H2O2 + H(+). It carries out the reaction retinal + O2 + H2O = retinoate + H2O2 + H(+). In terms of biological role, aldehyde oxidase able to catalyze the oxidation of retinaldehyde into retinoate. Acts as a negative modulator of the epidermal trophism. May be able to oxidize a wide variety of aldehydes into their corresponding carboxylates and to hydroxylate azaheterocycles. In Rattus norvegicus (Rat), this protein is Aldehyde oxidase 4 (Aox4).